The primary structure comprises 131 residues: MEKIEKTLEEWRAMLDPEQFNVCRLSATERPFSGKYNATKTDGVYHCICCNEPLFDSKTKFDSGCGWPSFYAPIGDNAMTEIRDTSHGMIRTEVKCAKCDAHLGHVFPDGPPPTGLRYCINSVCLDLVPRE.

Residues 8-130 form the MsrB domain; the sequence is LEEWRAMLDP…NSVCLDLVPR (123 aa). Residues cysteine 47, cysteine 50, cysteine 96, and cysteine 99 each contribute to the Zn(2+) site. Catalysis depends on cysteine 119, which acts as the Nucleophile.

Belongs to the MsrB Met sulfoxide reductase family. The cofactor is Zn(2+).

It carries out the reaction L-methionyl-[protein] + [thioredoxin]-disulfide + H2O = L-methionyl-(R)-S-oxide-[protein] + [thioredoxin]-dithiol. The chain is Peptide methionine sulfoxide reductase MsrB from Pseudomonas fluorescens (strain Pf0-1).